The primary structure comprises 152 residues: UPF0266 membrane protein YobD (152 aa).

3 helical membrane passes run 6-26, 45-65, and 67-87; these read LVLI…QFIM, VDSV…VTSH, and AQMT…IFWI.

This sequence belongs to the UPF0266 family.

It is found in the cell inner membrane. In Salmonella enteritidis PT4 (strain P125109), this protein is UPF0266 membrane protein YobD.